Here is a 387-residue protein sequence, read N- to C-terminus: MSNVAGELKNSEGKKKGRGNRYHNKNRGKSKNETVDPKKNENKVNNATNATHNNSKGRRNNKKRNREYYNYKRKARLGKSTENEGFKLVIRLLPPNLTADEFFAILRDNNNDDGDKQDIQGKLKYSDWCFFEGHYSSKVFKNSTYSRCNFLFDNLSDLEKCANFIKTCKFIDNKDNITIPDMKLSPYVKKFTQTSKKDAALVGTIEEDEIFKTFMNSMKQLNENDEYSFQDFSVLKSLEKEFSKSIELENKIAERTERVLTELVGTGDKVKNKNKKKKNKNAKKKFKEEEASAKIPKKKRNRGKKKRENREKSTISKTKNSNVVIIEEAGKEVLKQRKKKMLLQEKLKISNSSQPQSSSAQTQPSFQPKENLFVPRVKILHRDDTKK.

Disordered stretches follow at residues 1–71, 270–317, and 345–387; these read MSNV…YYNY, VKNK…TISK, and EKLK…DTKK. Over residues 15-29 the composition is skewed to basic residues; sequence KKGRGNRYHNKNRGK. Residues 15–31 carry the Nuclear localization signal motif; that stretch reads KKGRGNRYHNKNRGKSK. Residues 30–42 show a composition bias toward basic and acidic residues; the sequence is SKNETVDPKKNEN. Residues 43–52 show a composition bias toward polar residues; that stretch reads KVNNATNATH. Basic residues-rich tracts occupy residues 55–71, 272–285, and 295–307; these read SKGR…YYNY, NKNK…AKKK, and IPKK…KKKR. 2 consecutive short sequence motifs (nuclear localization signal) follow at residues 58–75 and 284–300; these read RRNN…KRKA and KKFK…KKKR. Residues 350–368 show a composition bias toward low complexity; the sequence is SNSSQPQSSSAQTQPSFQP.

This sequence belongs to the RENT3 family.

It is found in the nucleus. Its function is as follows. Involved in nonsense-mediated decay of mRNAs containing premature stop codons. The protein is Nonsense-mediated mRNA decay protein 3 (UPF3) of Saccharomyces cerevisiae (strain ATCC 204508 / S288c) (Baker's yeast).